Consider the following 1058-residue polypeptide: Translation initiation factor IF-2 (1058 aa).

Residues 1-12 (MNDTKTPGDKTL) show a composition bias toward basic and acidic residues. Positions 1–468 (MNDTKTPGDK…MTGHRGMQES (468 aa)) are disordered. A compositionally biased stretch (low complexity) spans 54-81 (APGEAGAPSGTPAAAPAATPAPAAAAPR). Positions 82–95 (PATPAPAAPRPAAP) are enriched in pro residues. A compositionally biased stretch (low complexity) spans 96 to 108 (ATPAQPAAEAKAP). A compositionally biased stretch (pro residues) spans 109–119 (APAPTPAPAAP). Composition is skewed to low complexity over residues 120–156 (AAPVAEAPKVEAPAPVAAKPEAAPAAPVAEAPKVEVP) and 164–228 (EPVA…QRPG). Residues 244-271 (RSGGPGSDRRGGPGGQNRPGQNRQGGSG) are compositionally biased toward gly residues. The span at 292–364 (ARVREVEERR…ARKRFGEETG (73 aa)) shows a compositional bias: basic and acidic residues. Over residues 368–396 (GASAPSTSTARPLTPRPAGTTTTTGAPAA) the composition is skewed to low complexity. The segment covering 452–461 (FRRRTQRMTG) has biased composition (basic residues). The region spanning 555–725 (PRPPVVTIMG…SLQSEVLDLK (171 aa)) is the tr-type G domain. Positions 564 to 571 (GHVDHGKT) are G1. A GTP-binding site is contributed by 564 to 571 (GHVDHGKT). The interval 589–593 (GITQH) is G2. The tract at residues 611 to 614 (DTPG) is G3. GTP contacts are provided by residues 611-615 (DTPGH) and 665-668 (NKID). A G4 region spans residues 665–668 (NKID). The interval 701 to 703 (SAT) is G5.

It belongs to the TRAFAC class translation factor GTPase superfamily. Classic translation factor GTPase family. IF-2 subfamily.

It localises to the cytoplasm. Its function is as follows. One of the essential components for the initiation of protein synthesis. Protects formylmethionyl-tRNA from spontaneous hydrolysis and promotes its binding to the 30S ribosomal subunits. Also involved in the hydrolysis of GTP during the formation of the 70S ribosomal complex. The protein is Translation initiation factor IF-2 of Azorhizobium caulinodans (strain ATCC 43989 / DSM 5975 / JCM 20966 / LMG 6465 / NBRC 14845 / NCIMB 13405 / ORS 571).